The primary structure comprises 181 residues: UPF0302 protein lmo1921 (181 aa).

Belongs to the UPF0302 family.

The polypeptide is UPF0302 protein lmo1921 (Listeria monocytogenes serovar 1/2a (strain ATCC BAA-679 / EGD-e)).